We begin with the raw amino-acid sequence, 53 residues long: Large ribosomal subunit protein uL30 (53 aa).

The protein belongs to the universal ribosomal protein uL30 family. Part of the 50S ribosomal subunit.

This is Large ribosomal subunit protein uL30 from Deinococcus geothermalis (strain DSM 11300 / CIP 105573 / AG-3a).